The chain runs to 548 residues: Membrane protein insertase YidC (548 aa).

Residues 6-26 (NLLVIALLFVSFMIWQAWEQD) traverse the membrane as a helical segment. Residues 28–55 (NPQPQAQQTTQTTTTAAGSAADQGVPAS) are disordered. The segment covering 30-50 (QPQAQQTTQTTTTAAGSAADQ) has biased composition (low complexity). The next 4 helical transmembrane spans lie at 350-370 (FVGNWGFSIIIITFIVRGIMY), 420-440 (LGGCFPLLIQMPIFLALYYML), 458-478 (LSAQDPYYILPILMGVTMFFI), and 499-519 (PVIFTVFFLWFPSGLVLYYIV).

This sequence belongs to the OXA1/ALB3/YidC family. Type 1 subfamily. As to quaternary structure, interacts with the Sec translocase complex via SecD. Specifically interacts with transmembrane segments of nascent integral membrane proteins during membrane integration.

It is found in the cell inner membrane. Its function is as follows. Required for the insertion and/or proper folding and/or complex formation of integral membrane proteins into the membrane. Involved in integration of membrane proteins that insert both dependently and independently of the Sec translocase complex, as well as at least some lipoproteins. Aids folding of multispanning membrane proteins. In Escherichia coli (strain K12 / MC4100 / BW2952), this protein is Membrane protein insertase YidC.